A 580-amino-acid polypeptide reads, in one-letter code: XK-related protein 7 (580 aa).

A compositionally biased stretch (low complexity) spans 1–22; it reads MAAKSDGAAAVAGPGPEGPAGA. A disordered region spans residues 1-28; that stretch reads MAAKSDGAAAVAGPGPEGPAGADRGGAG. The next 8 helical transmembrane spans lie at 59–79, 89–109, 260–280, 303–323, 326–346, 355–375, 384–404, and 415–435; these read WVLC…WLAA, YFGL…LLSF, LLTA…LASY, VLWH…FASV, LYFG…VIQG, WEEI…WFNV, VTLY…FWYS, and LILV…MCVY. A disordered region spans residues 470–516; sequence TSPPRSLPRTTGAERDGAAVGGERAGTPTPPVFQVRPGLPPTPVARP.

Belongs to the XK family.

The protein resides in the cell membrane. This chain is XK-related protein 7, found in Rattus norvegicus (Rat).